The sequence spans 314 residues: Acetyl-coenzyme A carboxylase carboxyl transferase subunit beta, chloroplastic (314 aa).

Residues 47-314 (LWTRCDNCEN…APWKEKNNQV (268 aa)) enclose the CoA carboxyltransferase N-terminal domain. Positions 51, 54, 70, and 73 each coordinate Zn(2+). Residues 51-73 (CDNCENMLYIKFLKQNKGVCEEC) form a C4-type zinc finger.

This sequence belongs to the AccD/PCCB family. In terms of assembly, acetyl-CoA carboxylase is a heterohexamer composed of biotin carboxyl carrier protein, biotin carboxylase and 2 subunits each of ACCase subunit alpha and ACCase plastid-coded subunit beta (accD). It depends on Zn(2+) as a cofactor.

Its subcellular location is the plastid. The protein localises to the chloroplast stroma. The catalysed reaction is N(6)-carboxybiotinyl-L-lysyl-[protein] + acetyl-CoA = N(6)-biotinyl-L-lysyl-[protein] + malonyl-CoA. The protein operates within lipid metabolism; malonyl-CoA biosynthesis; malonyl-CoA from acetyl-CoA: step 1/1. Functionally, component of the acetyl coenzyme A carboxylase (ACC) complex. Biotin carboxylase (BC) catalyzes the carboxylation of biotin on its carrier protein (BCCP) and then the CO(2) group is transferred by the transcarboxylase to acetyl-CoA to form malonyl-CoA. The polypeptide is Acetyl-coenzyme A carboxylase carboxyl transferase subunit beta, chloroplastic (Angiopteris lygodiifolia (Turnip fern)).